We begin with the raw amino-acid sequence, 346 residues long: Phosphoribosylformylglycinamidine cyclo-ligase (346 aa).

Belongs to the AIR synthase family.

The protein localises to the cytoplasm. It catalyses the reaction 2-formamido-N(1)-(5-O-phospho-beta-D-ribosyl)acetamidine + ATP = 5-amino-1-(5-phospho-beta-D-ribosyl)imidazole + ADP + phosphate + H(+). It functions in the pathway purine metabolism; IMP biosynthesis via de novo pathway; 5-amino-1-(5-phospho-D-ribosyl)imidazole from N(2)-formyl-N(1)-(5-phospho-D-ribosyl)glycinamide: step 2/2. The chain is Phosphoribosylformylglycinamidine cyclo-ligase from Vibrio parahaemolyticus serotype O3:K6 (strain RIMD 2210633).